The following is a 171-amino-acid chain: Odorant-binding protein 1b (171 aa).

Residues Met-1 to Ala-19 form the signal peptide. Disulfide bonds link Cys-57/Cys-61 and Cys-76/Cys-169.

It belongs to the calycin superfamily. Lipocalin family. As to quaternary structure, may form a heterodimer with OBP1A. Post-translationally, the N-terminus may be blocked. Expressed in nasal mucosa (at protein level). Specifically detected in septal and lateral nasal glands.

The protein localises to the secreted. Functionally, binds the chemical odorant 2-isobutyl-3-methoxypyrazine. The protein is Odorant-binding protein 1b of Mus musculus (Mouse).